A 300-amino-acid polypeptide reads, in one-letter code: Homoserine kinase (300 aa).

Residue 82 to 92 (RPGSGLGSSAA) participates in ATP binding.

It belongs to the GHMP kinase family. Homoserine kinase subfamily.

Its subcellular location is the cytoplasm. The enzyme catalyses L-homoserine + ATP = O-phospho-L-homoserine + ADP + H(+). The protein operates within amino-acid biosynthesis; L-threonine biosynthesis; L-threonine from L-aspartate: step 4/5. In terms of biological role, catalyzes the ATP-dependent phosphorylation of L-homoserine to L-homoserine phosphate. This chain is Homoserine kinase, found in Methanocella arvoryzae (strain DSM 22066 / NBRC 105507 / MRE50).